The chain runs to 238 residues: Trypsin-3 (238 aa).

The signal sequence occupies residues 1–7 (FAVAFAA). Residues 8 to 15 (PIDDEDDK) constitute a propeptide, activation peptide. The 221-residue stretch at 16–236 (IVGGYECRKN…YRSWISSTMS (221 aa)) folds into the Peptidase S1 domain. Disulfide bonds link cysteine 22–cysteine 152, cysteine 40–cysteine 56, cysteine 124–cysteine 225, cysteine 131–cysteine 198, cysteine 163–cysteine 177, and cysteine 188–cysteine 212. Residue histidine 55 is the Charge relay system of the active site. Ca(2+) contacts are provided by glutamate 67, asparagine 69, valine 72, and glutamate 77. Catalysis depends on aspartate 99, which acts as the Charge relay system. Serine 192 acts as the Charge relay system in catalysis.

Belongs to the peptidase S1 family. Requires Ca(2+) as cofactor.

It localises to the secreted. The protein localises to the extracellular space. The enzyme catalyses Preferential cleavage: Arg-|-Xaa, Lys-|-Xaa.. This chain is Trypsin-3, found in Salmo salar (Atlantic salmon).